The primary structure comprises 366 residues: MKVLAAMSGGVDSAVAAARLVEAGHDVTGVHLALSRNPRSHREGSRGCCSLEDSFDARRAADRLGIPFYVWDFSDRFVAEVIDPFIAEYRAGRTPNPCLRCNERIKFAALLERGLDLGYDAVATGHYARTKVVDGVTKLYRSVDPGKDQSYVLAVLNQDQLSHSLFPLGNSLKMNVRQEAAALGLSVADKPDSNDICFIPDGDTPGWLSEKIGSADGEIRDESGALVGHHNGYHHFTIGQRRGLRLGVPAPDGKPRYVLDIEPVNNTVVVGGAEGLTVHHIEAIRPVWCSSEPVETWHGQAQVRAHGDPVPAIISAVPGGVAVELEDSLRGVAPGQAAVFYDGDLVVGSATICGTDRAGVKAEQAA.

Residues Ala6–Ser13 and Leu32 contribute to the ATP site. Cys101 serves as the catalytic Nucleophile. Cysteines 101 and 197 form a disulfide. An ATP-binding site is contributed by Gly125. The segment at Lys147 to Gln149 is interaction with tRNA. The active-site Cysteine persulfide intermediate is the Cys197.

The protein belongs to the MnmA/TRMU family.

It is found in the cytoplasm. The enzyme catalyses S-sulfanyl-L-cysteinyl-[protein] + uridine(34) in tRNA + AH2 + ATP = 2-thiouridine(34) in tRNA + L-cysteinyl-[protein] + A + AMP + diphosphate + H(+). Catalyzes the 2-thiolation of uridine at the wobble position (U34) of tRNA, leading to the formation of s(2)U34. The chain is tRNA-specific 2-thiouridylase MnmA from Cutibacterium acnes (strain DSM 16379 / KPA171202) (Propionibacterium acnes).